Here is a 424-residue protein sequence, read N- to C-terminus: MFLLPRFVLVSCIIGSLGFDNPPTNVVSHLNGDWFLFGDSRSDCNHVVTTNPRNYSYMDLNPALCGSGKISSKAGNSIFRSFHFTDFYNYTGEGQQIIFYEGVNFTPYHAFKCTTSGSNDIWMQNKGLFYTQVYKNMAVYRSLTFVNVPYVYNGSAQSTALCKSGSLVLNNPAYIAREANFGDYYYKVEADFYLSGCDEYIVPLCIFNGKFLSNTKYYDDSQYYFNKDTGVIYGLNSTETITTGFDFNCHYLVLPSGNYLAISNELLLTVPTKAICLNKRKDFTPVQVVDSRWNNARQSDNMTAVACQPPYCYFRNSTTNYVGVYDINHGDAGFTSILSGLLYDSPCFSQQGVFRYDNVSSVWPLYPYGRCPTAADINTPDVPICVYDPLPIIFLGILLGVAVIIIVVLLLYFMVDNGTRLHDA.

The N-terminal stretch at 1–16 is a signal peptide; that stretch reads MFLLPRFVLVSCIIGS. The esterase domain 1 stretch occupies residues 7–127; that stretch reads FVLVSCIIGS…SNDIWMQNKG (121 aa). At 17–392 the chain is on the virion surface side; the sequence is LGFDNPPTNV…PICVYDPLPI (376 aa). S40 acts as the Nucleophile in catalysis. C44 and C65 are oxidised to a cystine. N54, N89, N153, N236, and N301 each carry an N-linked (GlcNAc...) asparagine; by host glycan. Intrachain disulfides connect C113–C162, C197–C276, and C205–C249. The segment at 128 to 266 is receptor binding; it reads LFYTQVYKNM…GNYLAISNEL (139 aa). Residues 267 to 379 form an esterase domain 2 region; the sequence is LLTVPTKAIC…RCPTAADINT (113 aa). The cysteines at positions 307 and 312 are disulfide-linked. Residue N316 is glycosylated (N-linked (GlcNAc...) asparagine; by host). Catalysis depends on charge relay system residues D326 and H329. The cysteines at positions 347 and 371 are disulfide-linked. A glycan (N-linked (GlcNAc...) asparagine; by host) is linked at N358. The helical transmembrane segment at 393-413 threads the bilayer; sequence IFLGILLGVAVIIIVVLLLYF. Residues 414–424 are Intravirion-facing; it reads MVDNGTRLHDA. N-linked (GlcNAc...) asparagine; by host glycosylation is present at N417.

This sequence belongs to the influenza type C/coronaviruses hemagglutinin-esterase family. Homodimer; disulfide-linked. Forms a complex with the M protein in the pre-Golgi. Associates then with S-M complex to form a ternary complex S-M-HE. N-glycosylated in the host RER.

Its subcellular location is the virion membrane. The protein localises to the host cell membrane. It catalyses the reaction N-acetyl-9-O-acetylneuraminate + H2O = N-acetylneuraminate + acetate + H(+). The enzyme catalyses N-acetyl-4-O-acetylneuraminate + H2O = N-acetylneuraminate + acetate + H(+). Functionally, structural protein that makes short spikes at the surface of the virus. Contains receptor binding and receptor-destroying activities. Mediates de-O-acetylation of N-acetyl-4-O-acetylneuraminic acid, which is probably the receptor determinant recognized by the virus on the surface of erythrocytes and susceptible cells. This receptor-destroying activity is important for virus release as it probably helps preventing self-aggregation and ensures the efficient spread of the progeny virus from cell to cell. May serve as a secondary viral attachment protein for initiating infection, the spike protein being the major one. May become a target for both the humoral and the cellular branches of the immune system. The sequence is that of Hemagglutinin-esterase from Bovine coronavirus (strain Ontario) (BCoV).